We begin with the raw amino-acid sequence, 265 residues long: Tryptophan synthase alpha chain (265 aa).

Active-site proton acceptor residues include Glu-49 and Glu-60.

The protein belongs to the TrpA family. As to quaternary structure, tetramer of two alpha and two beta chains.

It catalyses the reaction (1S,2R)-1-C-(indol-3-yl)glycerol 3-phosphate + L-serine = D-glyceraldehyde 3-phosphate + L-tryptophan + H2O. Its pathway is amino-acid biosynthesis; L-tryptophan biosynthesis; L-tryptophan from chorismate: step 5/5. The alpha subunit is responsible for the aldol cleavage of indoleglycerol phosphate to indole and glyceraldehyde 3-phosphate. The polypeptide is Tryptophan synthase alpha chain (Janthinobacterium sp. (strain Marseille) (Minibacterium massiliensis)).